Consider the following 146-residue polypeptide: uncharacterized protein (146 aa).

Helical transmembrane passes span 1–21, 35–55, 87–107, and 111–131; these read MFANAGLSPFVAIWTARAASL, AAVYVGSAVVPAAVAGPLFVG, GGAGGWVGVHCPVVGGGGVGH, and AIAAAVSVHSTCMPAAFGGHL.

Its subcellular location is the cell membrane. This is an uncharacterized protein from Mycobacterium tuberculosis (strain CDC 1551 / Oshkosh).